A 273-amino-acid polypeptide reads, in one-letter code: Nickel import ATP-binding protein NikE (273 aa).

An ABC transporter domain is found at 13–252 (YRTGGLLRKR…AHPVGRQLQA (240 aa)). 45–52 (GSSGSGKS) is a binding site for ATP.

It belongs to the ABC transporter superfamily. Nickel importer (TC 3.A.1.5.3) family. As to quaternary structure, the complex is composed of two ATP-binding proteins (NikD and NikE), two transmembrane proteins (NikB and NikC) and a solute-binding protein (NikA).

It localises to the cell inner membrane. It carries out the reaction Ni(2+)(out) + ATP + H2O = Ni(2+)(in) + ADP + phosphate + H(+). Part of the ABC transporter complex NikABCDE involved in nickel import. Responsible for energy coupling to the transport system. The protein is Nickel import ATP-binding protein NikE of Pseudomonas putida (strain ATCC 47054 / DSM 6125 / CFBP 8728 / NCIMB 11950 / KT2440).